A 275-amino-acid chain; its full sequence is Probable ABC transporter permease protein NosY (275 aa).

Helical transmembrane passes span 20-40 (WLLA…WFGA), 60-80 (SLAT…AIVG), 111-131 (ILAL…LALV), 146-166 (FMGS…ALSS), 179-199 (LGLW…ILVL), and 250-270 (ALWL…HGLF).

In terms of assembly, the complex may be composed of an ATP-binding protein (NosF), a transmembrane protein (NosY) and a solute-binding protein (NosD).

Its subcellular location is the cell inner membrane. Its function is as follows. Required for the assembly of the copper chromophores of nitrous oxide reductase. Could be part of the ABC transporter complex NosDFY. The protein is Probable ABC transporter permease protein NosY (nosY) of Pseudomonas aeruginosa (strain ATCC 15692 / DSM 22644 / CIP 104116 / JCM 14847 / LMG 12228 / 1C / PRS 101 / PAO1).